Here is a 183-residue protein sequence, read N- to C-terminus: Calcium-binding protein M (183 aa).

Residue G2 is the site of N-myristoyl glycine attachment. EF-hand domains lie at E25–N60, Y61–G96, S97–V132, and D142–L177. Residues D74, D76, S78, T80, E85, D110, D112, S114, E121, D155, D157, N159, and E166 each contribute to the Ca(2+) site.

It belongs to the recoverin family.

This is Calcium-binding protein M (cbpM) from Dictyostelium discoideum (Social amoeba).